The sequence spans 267 residues: 4-hydroxy-tetrahydrodipicolinate reductase (267 aa).

Residues 9–14 and D35 contribute to the NAD(+) site; that span reads GAAGRM. R36 serves as a coordination point for NADP(+). NAD(+) contacts are provided by residues 99-101 and 123-126; these read GTT and APNY. H156 (proton donor/acceptor) is an active-site residue. H157 contributes to the (S)-2,3,4,5-tetrahydrodipicolinate binding site. The active-site Proton donor is the K160. 166–167 contacts (S)-2,3,4,5-tetrahydrodipicolinate; that stretch reads GT.

The protein belongs to the DapB family.

The protein localises to the cytoplasm. The enzyme catalyses (S)-2,3,4,5-tetrahydrodipicolinate + NAD(+) + H2O = (2S,4S)-4-hydroxy-2,3,4,5-tetrahydrodipicolinate + NADH + H(+). It catalyses the reaction (S)-2,3,4,5-tetrahydrodipicolinate + NADP(+) + H2O = (2S,4S)-4-hydroxy-2,3,4,5-tetrahydrodipicolinate + NADPH + H(+). It participates in amino-acid biosynthesis; L-lysine biosynthesis via DAP pathway; (S)-tetrahydrodipicolinate from L-aspartate: step 4/4. In terms of biological role, catalyzes the conversion of 4-hydroxy-tetrahydrodipicolinate (HTPA) to tetrahydrodipicolinate. This is 4-hydroxy-tetrahydrodipicolinate reductase from Alkalilimnicola ehrlichii (strain ATCC BAA-1101 / DSM 17681 / MLHE-1).